A 178-amino-acid polypeptide reads, in one-letter code: uncharacterized protein (178 aa).

This is an uncharacterized protein from Escherichia coli (strain K12).